A 98-amino-acid chain; its full sequence is DNA-binding protein Fis (98 aa).

The segment at residues Gln74 to Lys93 is a DNA-binding region (H-T-H motif).

This sequence belongs to the transcriptional regulatory Fis family. As to quaternary structure, homodimer.

Its function is as follows. Activates ribosomal RNA transcription. Plays a direct role in upstream activation of rRNA promoters. The protein is DNA-binding protein Fis of Sodalis glossinidius (strain morsitans).